The chain runs to 75 residues: Brevinin-2ISc (75 aa).

The first 22 residues, methionine 1–cysteine 22, serve as a signal peptide directing secretion. Positions glutamate 23–valine 40 are cleaved as a propeptide — removed in mature form. Cysteine 69 and cysteine 75 are disulfide-bonded.

In terms of tissue distribution, expressed by the skin glands.

The protein resides in the secreted. Has antimicrobial activity against Gram-negative bacterium E.coli ATCC 8739 (MIC=50 ug) and against Gram positive bacteria S.aureus ATCC 6538 (MIC=25 ug). Has no activity against methicillin-resistant S.aureus ATCC 43300, B.subtilis ATCC 6633 and against fungus C.albicans ATCC 90028. The sequence is that of Brevinin-2ISc from Odorrana ishikawae (Ishikawa's frog).